The primary structure comprises 711 residues: Ecdysone-inducible protein E75 (711 aa).

Positions 44 to 120 form a DNA-binding region, nuclear receptor; the sequence is TVLCRVCGDK…VGMSRDAVRF (77 aa). NR C4-type zinc fingers lie at residues 47–67 and 84–108; these read CRVC…CEGC and CTKN…LKKC. One can recognise an NR LBD domain in the interval 153–400; the sequence is DGPRLLARVV…QQMWVEDEGA (248 aa). Disordered regions lie at residues 405–432, 466–530, 559–602, and 680–711; these read SGAD…DCGT, LTVT…DMPV, AMRR…PIRA, and DAPQ…MLPA. 2 stretches are compositionally biased toward basic and acidic residues: residues 511–521 and 560–572; these read SLEEHSDDRRP and MRRD…EARP. The segment covering 574 to 590 has biased composition (pro residues); that stretch reads RPTPSPQPPHHPHPASP. Composition is skewed to low complexity over residues 591–602 and 682–692; these read AHPAHSPRPIRA and PQPLNLSKKSP. The segment covering 693-711 has biased composition (pro residues); that stretch reads SPSPPPPPPRSYMPPMLPA.

Belongs to the nuclear hormone receptor family. NR1 subfamily.

The protein resides in the nucleus. Its function is as follows. Orphan receptor possibly involved in the regulation of genes in the ecdysteroid cascade. This chain is Ecdysone-inducible protein E75 (E75), found in Galleria mellonella (Greater wax moth).